The chain runs to 512 residues: Cytochrome P450 26B1 (512 aa).

A heme-binding site is contributed by cysteine 441.

It belongs to the cytochrome P450 family. It depends on heme as a cofactor.

Its subcellular location is the endoplasmic reticulum membrane. It is found in the microsome membrane. It catalyses the reaction all-trans-retinoate + reduced [NADPH--hemoprotein reductase] + O2 = all-trans-4-hydroxyretinoate + oxidized [NADPH--hemoprotein reductase] + H2O + H(+). The catalysed reaction is all-trans-retinoate + reduced [NADPH--hemoprotein reductase] + O2 = all-trans-18-hydroxyretinoate + oxidized [NADPH--hemoprotein reductase] + H2O + H(+). In terms of biological role, a cytochrome P450 monooxygenase involved in the metabolism of retinoates (RAs), the active metabolites of vitamin A, and critical signaling molecules in animals. RAs exist as at least four different isomers: all-trans-RA (atRA), 9-cis-RA, 13-cis-RA, and 9,13-dicis-RA, where atRA is considered to be the biologically active isomer, although 9-cis-RA and 13-cis-RA also have activity. Catalyzes the hydroxylation of atRA primarily at C-4 and C-18, thereby contributing to the regulation of atRA homeostasis and signaling. Hydroxylation of atRA limits its biological activity and initiates a degradative process leading to its eventual elimination. Involved in the convertion of atRA to all-trans-4-oxo-RA. Can oxidize all-trans-13,14-dihydroretinoate (DRA) to metabolites which could include all-trans-4-oxo-DRA, all-trans-4-hydroxy-DRA, all-trans-5,8-epoxy-DRA, and all-trans-18-hydroxy-DRA. Shows preference for the following substrates: atRA &gt; 9-cis-RA &gt; 13-cis-RA. Plays a central role in germ cell development: acts by degrading RAs in the developing testis, preventing STRA8 expression, thereby leading to delay of meiosis. Required for the maintenance of the undifferentiated state of male germ cells during embryonic development in Sertoli cells, inducing arrest in G0 phase of the cell cycle and preventing meiotic entry. Plays a role in skeletal development, both at the level of patterning and in the ossification of bone and the establishment of some synovial joints. Essential for postnatal survival. Also has a significant activity in oxidation of tazarotenic acid and may therefore metabolize that xenobiotic in vivo. The sequence is that of Cytochrome P450 26B1 (Cyp26b1) from Mus musculus (Mouse).